Consider the following 387-residue polypeptide: Probable aminomethyltransferase, mitochondrial (387 aa).

Substrate-binding residues include E219, R248, and Y385.

Belongs to the GcvT family. The glycine cleavage system is composed of four proteins: P, T, L and H.

It is found in the mitochondrion. It carries out the reaction N(6)-[(R)-S(8)-aminomethyldihydrolipoyl]-L-lysyl-[protein] + (6S)-5,6,7,8-tetrahydrofolate = N(6)-[(R)-dihydrolipoyl]-L-lysyl-[protein] + (6R)-5,10-methylene-5,6,7,8-tetrahydrofolate + NH4(+). Functionally, the glycine cleavage system catalyzes the degradation of glycine. The chain is Probable aminomethyltransferase, mitochondrial (gcv1) from Schizosaccharomyces pombe (strain 972 / ATCC 24843) (Fission yeast).